A 269-amino-acid chain; its full sequence is 4-hydroxy-tetrahydrodipicolinate reductase (269 aa).

Residues 11–16 and Glu37 each bind NAD(+); that span reads GASGRM. Arg38 provides a ligand contact to NADP(+). NAD(+) contacts are provided by residues 101-103 and 125-128; these read GTT and AGNM. His158 functions as the Proton donor/acceptor in the catalytic mechanism. His159 is a (S)-2,3,4,5-tetrahydrodipicolinate binding site. Catalysis depends on Lys162, which acts as the Proton donor. Residue 168–169 coordinates (S)-2,3,4,5-tetrahydrodipicolinate; the sequence is GT.

This sequence belongs to the DapB family.

It localises to the cytoplasm. The catalysed reaction is (S)-2,3,4,5-tetrahydrodipicolinate + NAD(+) + H2O = (2S,4S)-4-hydroxy-2,3,4,5-tetrahydrodipicolinate + NADH + H(+). The enzyme catalyses (S)-2,3,4,5-tetrahydrodipicolinate + NADP(+) + H2O = (2S,4S)-4-hydroxy-2,3,4,5-tetrahydrodipicolinate + NADPH + H(+). It participates in amino-acid biosynthesis; L-lysine biosynthesis via DAP pathway; (S)-tetrahydrodipicolinate from L-aspartate: step 4/4. Functionally, catalyzes the conversion of 4-hydroxy-tetrahydrodipicolinate (HTPA) to tetrahydrodipicolinate. The protein is 4-hydroxy-tetrahydrodipicolinate reductase of Cereibacter sphaeroides (strain KD131 / KCTC 12085) (Rhodobacter sphaeroides).